The primary structure comprises 787 residues: LPS-assembly protein LptD (787 aa).

The first 39 residues, 1–39 (MPPKTLFPLVPACDAAPRKKRLAVALLAVPGLVPAVSQA), serve as a signal peptide directing secretion.

Belongs to the LptD family. Component of the lipopolysaccharide transport and assembly complex. Interacts with LptE and LptA.

Its subcellular location is the cell outer membrane. Its function is as follows. Together with LptE, is involved in the assembly of lipopolysaccharide (LPS) at the surface of the outer membrane. The chain is LPS-assembly protein LptD from Burkholderia pseudomallei (strain 1710b).